A 207-amino-acid polypeptide reads, in one-letter code: Cytochrome bo(3) ubiquinol oxidase subunit 3 (207 aa).

Over 1-26 (MSSQVMHGAAHGHDHGHDDHHHDSGQ) the chain is Cytoplasmic. The helical transmembrane segment at 27–47 (MTVLGFWLYLMTDCILFASLF) threads the bilayer. Residues 48 to 70 (ATYAVLSGSFAGGPSGHDIFQLD) lie on the Periplasmic side of the membrane. A helical transmembrane segment spans residues 71 to 91 (FVAVETLFLLLSSITFGFAML). Residues 92 to 99 (KMFDGKKA) are Cytoplasmic-facing. A helical transmembrane segment spans residues 100–120 (GVLGWLAVTFLFGAGFIAMEI). The Periplasmic portion of the chain corresponds to 121 to 141 (YEFHHLIAEGFGPQRSGFLSG). The helical transmembrane segment at 142–162 (FFALVGTHGLHVTAGLIWMAI) threads the bilayer. Over 163–185 (MMYQINKHGITPTAKTRMSCLSL) the chain is Cytoplasmic. Residues 186–206 (FWHFLDVVWICVFTVVYLLGV) form a helical membrane-spanning segment. A topological domain (periplasmic) is located at residue L207.

Belongs to the cytochrome c oxidase subunit 3 family. In terms of assembly, heterooctamer of two A chains, two B chains, two C chains and two D chains.

The protein localises to the cell inner membrane. Its function is as follows. Cytochrome bo(3) ubiquinol terminal oxidase is the component of the aerobic respiratory chain of E.coli that predominates when cells are grown at high aeration. Has proton pump activity across the membrane in addition to electron transfer, pumping 2 protons/electron. The sequence is that of Cytochrome bo(3) ubiquinol oxidase subunit 3 (cyoC) from Pseudomonas putida (Arthrobacter siderocapsulatus).